Here is a 137-residue protein sequence, read N- to C-terminus: Small ribosomal subunit protein uS9 (137 aa).

A disordered region spans residues 105–137 (LKTEGYLKRDPRAVERKKYGLRKARKAPQYSKR). Basic and acidic residues predominate over residues 109-122 (GYLKRDPRAVERKK). Over residues 123–137 (YGLRKARKAPQYSKR) the composition is skewed to basic residues.

Belongs to the universal ribosomal protein uS9 family.

This Synechococcus sp. (strain JA-3-3Ab) (Cyanobacteria bacterium Yellowstone A-Prime) protein is Small ribosomal subunit protein uS9.